A 505-amino-acid polypeptide reads, in one-letter code: 2,3-bisphosphoglycerate-independent phosphoglycerate mutase (505 aa).

Mn(2+) is bound by residues aspartate 11 and serine 61. The active-site Phosphoserine intermediate is the serine 61. Substrate-binding positions include histidine 122, 152 to 153 (RD), arginine 183, arginine 189, 259 to 262 (RTDR), and lysine 332. The Mn(2+) site is built by aspartate 399, histidine 403, aspartate 440, histidine 441, and histidine 458.

This sequence belongs to the BPG-independent phosphoglycerate mutase family. As to quaternary structure, monomer. Mn(2+) serves as cofactor.

It carries out the reaction (2R)-2-phosphoglycerate = (2R)-3-phosphoglycerate. The protein operates within carbohydrate degradation; glycolysis; pyruvate from D-glyceraldehyde 3-phosphate: step 3/5. Its function is as follows. Catalyzes the interconversion of 2-phosphoglycerate and 3-phosphoglycerate. The polypeptide is 2,3-bisphosphoglycerate-independent phosphoglycerate mutase (Flavobacterium psychrophilum (strain ATCC 49511 / DSM 21280 / CIP 103535 / JIP02/86)).